Here is a 289-residue protein sequence, read N- to C-terminus: Secretory carrier-associated membrane protein (289 aa).

Residues 1-65 (MAGRYDPNPF…TSTDGKKKER (65 aa)) are disordered. Residues 1 to 123 (MAGRYDPNPF…EIPIHLRTLQ (123 aa)) are Cytoplasmic-facing. Residues 16–31 (NPFSNPRSAASATNSR) are compositionally biased toward polar residues. Residues 59–98 (DGKKKERDLQAKEAELRKREQEVRRKEEAIARAGIVIEEK) are a coiled coil. A run of 4 helical transmembrane segments spans residues 124-144 (YVAFFSLLGLVLCLTWNVVSV), 156-176 (IWFLAIIYFIAGVPGAYALWY), 191-211 (FGWFFMFYLLHIGFCILAAVA), and 239-259 (IFYFIGFGFFCLETLISIWVI). Topologically, residues 260 to 289 (QQVYMHFRGGGKTAEMKREAALGAMGAALR) are cytoplasmic.

It belongs to the SCAMP family.

Its subcellular location is the cell membrane. It is found in the cytoplasmic vesicle. It localises to the secretory vesicle membrane. Its function is as follows. Probably involved in membrane trafficking. This is Secretory carrier-associated membrane protein (PSAM2) from Pisum sativum (Garden pea).